Reading from the N-terminus, the 292-residue chain is N-acetylneuraminate lyase (292 aa).

Aceneuramate contacts are provided by S47 and T48. The Proton donor role is filled by Y136. K164 functions as the Schiff-base intermediate with substrate in the catalytic mechanism. Residues T166, G188, D190, E191, and S207 each contribute to the aceneuramate site.

It belongs to the DapA family. NanA subfamily. As to quaternary structure, homotetramer.

It is found in the cytoplasm. The enzyme catalyses aceneuramate = aldehydo-N-acetyl-D-mannosamine + pyruvate. Its pathway is amino-sugar metabolism; N-acetylneuraminate degradation; D-fructose 6-phosphate from N-acetylneuraminate: step 1/5. Catalyzes the reversible aldol cleavage of N-acetylneuraminic acid (sialic acid; Neu5Ac) to form pyruvate and N-acetylmannosamine (ManNAc) via a Schiff base intermediate. In Actinobacillus pleuropneumoniae serotype 5b (strain L20), this protein is N-acetylneuraminate lyase.